Reading from the N-terminus, the 661-residue chain is MAPSADPGMSRMLPFLLLLWFLPITEGSQRAEPMFTAVTNSVLPPDYDSNPTQLNYGVAVTDVDHDGDFEIVVAGYNGPNLVLKYDRAQKRLVNIAVDERSSPYYALRDRQGNAIGVTACDIDGDGREEIYFLNTNNAFSGVATYTDKLFKFRNNRWEDILSDEVNVARGVASLFAGRSVACVDRKGSGRYSIYIANYAYGNVGPDALIEMDPEASDLSRGILALRDVAAEAGVSKYTGGRGVSVGPILSSSASDIFCDNENGPNFLFHNRGDGTFVDAAASAGVDDPHQHGRGVALADFNRDGKVDIVYGNWNGPHRLYLQMSTHGKVRFRDIASPKFSMPSPVRTVITADFDNDQELEIFFNNIAYRSSSANRLFRVIRREHGDPLIEELNPGDALEPEGRGTGGVVTDFDGDGMLDLILSHGESMAQPLSVFRGNQGFNNNWLRVVPRTRFGAFARGAKVVLYTKKSGAHLRIIDGGSGYLCEMEPVAHFGLGKDEASSVEVTWPDGKMVSRNVASGEMNSVLEILYPRDEDTLQDPAPLECGQGFSQQENGHCMDTNECIQFPFVCPRDKPVCVNTYGSYRCRTNKKCSRGYEPNEDGTACVGTLGQSPGPRPTTPTAAAATAAAAAAAGAATAAPVLVDGDLNLGSVVKESCEPSC.

The first 27 residues, 1 to 27 (MAPSADPGMSRMLPFLLLLWFLPITEG), serve as a signal peptide directing secretion. An FG-GAP 1; atypical repeat occupies 46-88 (DYDSNPTQLNYGVAVTDVDHDGDFEIVVAGYNGPNLVLKYDRA). An FG-GAP 2; atypical repeat occupies 105 to 147 (YALRDRQGNAIGVTACDIDGDGREEIYFLNTNNAFSGVATYTD). The FG-GAP 3; atypical repeat unit spans residues 283–333 (AGVDDPHQHGRGVALADFNRDGKVDIVYGNWNGPHRLYLQMSTHGKVRFRD). Residues 395–437 (GDALEPEGRGTGGVVTDFDGDGMLDLILSHGESMAQPLSVFRG) form an FG-GAP 4; atypical repeat. An EGF-like domain is found at 559-605 (DTNECIQFPFVCPRDKPVCVNTYGSYRCRTNKKCSRGYEPNEDGTAC). 3 disulfide bridges follow: C563/C577, C570/C586, and C592/C605. O-linked (GalNAc...) threonine glycosylation is found at T608, T618, T619, T621, and T626.

Post-translationally, O-glycosylated. Expressed in the interterritorial matrix of articular deep zone cartilage (at protein level). Isoform 1 and isoform 2 are expressed in brain. Isoform 1 is detected in lung and chondrocytes. Detected in cartilage, bone, cultured chondrocytes and lung, and at low levels in heart. Not detected in osteoblasts.

It localises to the secreted. Its subcellular location is the extracellular space. The protein resides in the extracellular matrix. The protein is Cartilage acidic protein 1 (CRTAC1) of Homo sapiens (Human).